The sequence spans 143 residues: Putative pre-16S rRNA nuclease (143 aa).

This sequence belongs to the YqgF nuclease family.

It localises to the cytoplasm. Functionally, could be a nuclease involved in processing of the 5'-end of pre-16S rRNA. This Crocosphaera subtropica (strain ATCC 51142 / BH68) (Cyanothece sp. (strain ATCC 51142)) protein is Putative pre-16S rRNA nuclease.